The sequence spans 470 residues: UDP-N-acetylmuramate--L-alanine ligase (470 aa).

118 to 124 is a binding site for ATP; sequence GTHGKTT.

Belongs to the MurCDEF family.

It is found in the cytoplasm. It carries out the reaction UDP-N-acetyl-alpha-D-muramate + L-alanine + ATP = UDP-N-acetyl-alpha-D-muramoyl-L-alanine + ADP + phosphate + H(+). It participates in cell wall biogenesis; peptidoglycan biosynthesis. Functionally, cell wall formation. This Cereibacter sphaeroides (strain ATCC 17029 / ATH 2.4.9) (Rhodobacter sphaeroides) protein is UDP-N-acetylmuramate--L-alanine ligase.